Consider the following 156-residue polypeptide: Small ribosomal subunit protein uS7A/uS7B (156 aa).

The protein belongs to the universal ribosomal protein uS7 family. As to quaternary structure, part of the 30S ribosomal subunit. Contacts proteins S9 and S11.

Its function is as follows. One of the primary rRNA binding proteins, it binds directly to 16S rRNA where it nucleates assembly of the head domain of the 30S subunit. Is located at the subunit interface close to the decoding center, probably blocks exit of the E-site tRNA. In Bartonella bacilliformis (strain ATCC 35685 / KC583 / Herrer 020/F12,63), this protein is Small ribosomal subunit protein uS7A/uS7B.